The following is a 462-amino-acid chain: ATP synthase subunit beta (462 aa).

ATP is bound at residue 151-158 (GGAGVGKT).

This sequence belongs to the ATPase alpha/beta chains family. F-type ATPases have 2 components, CF(1) - the catalytic core - and CF(0) - the membrane proton channel. CF(1) has five subunits: alpha(3), beta(3), gamma(1), delta(1), epsilon(1). CF(0) has four main subunits: a(1), b(1), b'(1) and c(9-12).

It localises to the cell inner membrane. It carries out the reaction ATP + H2O + 4 H(+)(in) = ADP + phosphate + 5 H(+)(out). Functionally, produces ATP from ADP in the presence of a proton gradient across the membrane. The catalytic sites are hosted primarily by the beta subunits. The sequence is that of ATP synthase subunit beta from Pelodictyon phaeoclathratiforme (strain DSM 5477 / BU-1).